The chain runs to 300 residues: Ribosomal protein L11 methyltransferase (300 aa).

Residues threonine 152, glycine 173, aspartate 195, and asparagine 234 each coordinate S-adenosyl-L-methionine.

The protein belongs to the methyltransferase superfamily. PrmA family.

Its subcellular location is the cytoplasm. The enzyme catalyses L-lysyl-[protein] + 3 S-adenosyl-L-methionine = N(6),N(6),N(6)-trimethyl-L-lysyl-[protein] + 3 S-adenosyl-L-homocysteine + 3 H(+). Functionally, methylates ribosomal protein L11. This Burkholderia lata (strain ATCC 17760 / DSM 23089 / LMG 22485 / NCIMB 9086 / R18194 / 383) protein is Ribosomal protein L11 methyltransferase.